The following is a 65-amino-acid chain: Large ribosomal subunit protein bL35 (65 aa).

Residues 1–16 (MVPKQKTHSGAKKRFK) are compositionally biased toward basic residues. The disordered stretch occupies residues 1 to 39 (MVPKQKTHSGAKKRFKLTGSGSVSRARAGMRHNFEHRSS).

The protein belongs to the bacterial ribosomal protein bL35 family.

In Tropheryma whipplei (strain TW08/27) (Whipple's bacillus), this protein is Large ribosomal subunit protein bL35.